The chain runs to 293 residues: Protease HtpX (293 aa).

The next 2 membrane-spanning stretches (helical) occupy residues 4 to 24 and 32 to 52; these read IALF…ILSL and VMGL…VSLL. Histidine 139 contacts Zn(2+). The active site involves glutamate 140. Residue histidine 143 coordinates Zn(2+). A run of 2 helical transmembrane segments spans residues 158–178 and 193–213; these read IVNT…AGFM and MVYF…ASTI. Glutamate 222 contacts Zn(2+).

Belongs to the peptidase M48B family. It depends on Zn(2+) as a cofactor.

It localises to the cell inner membrane. This chain is Protease HtpX, found in Erwinia tasmaniensis (strain DSM 17950 / CFBP 7177 / CIP 109463 / NCPPB 4357 / Et1/99).